The chain runs to 103 residues: Large ribosomal subunit protein bL21 (103 aa).

It belongs to the bacterial ribosomal protein bL21 family. Part of the 50S ribosomal subunit. Contacts protein L20.

This protein binds to 23S rRNA in the presence of protein L20. The sequence is that of Large ribosomal subunit protein bL21 from Delftia acidovorans (strain DSM 14801 / SPH-1).